Consider the following 187-residue polypeptide: ATP synthase subunit b 2 (187 aa).

The tract at residues 1-25 (MAESHGGAKGPAAGAHTGAEGGHGG) is disordered. The helical transmembrane segment at 39 to 59 (LVSLAIFFVVLYVIVSKLALP) threads the bilayer. Positions 103-122 (RAQAIGNESRDKANAQAETE) are disordered. Basic and acidic residues predominate over residues 110–122 (ESRDKANAQAETE).

It belongs to the ATPase B chain family. F-type ATPases have 2 components, F(1) - the catalytic core - and F(0) - the membrane proton channel. F(1) has five subunits: alpha(3), beta(3), gamma(1), delta(1), epsilon(1). F(0) has three main subunits: a(1), b(2) and c(10-14). The alpha and beta chains form an alternating ring which encloses part of the gamma chain. F(1) is attached to F(0) by a central stalk formed by the gamma and epsilon chains, while a peripheral stalk is formed by the delta and b chains.

Its subcellular location is the cell inner membrane. F(1)F(0) ATP synthase produces ATP from ADP in the presence of a proton or sodium gradient. F-type ATPases consist of two structural domains, F(1) containing the extramembraneous catalytic core and F(0) containing the membrane proton channel, linked together by a central stalk and a peripheral stalk. During catalysis, ATP synthesis in the catalytic domain of F(1) is coupled via a rotary mechanism of the central stalk subunits to proton translocation. In terms of biological role, component of the F(0) channel, it forms part of the peripheral stalk, linking F(1) to F(0). The b'-subunit is a diverged and duplicated form of b found in plants and photosynthetic bacteria. The chain is ATP synthase subunit b 2 (atpF2) from Bradyrhizobium diazoefficiens (strain JCM 10833 / BCRC 13528 / IAM 13628 / NBRC 14792 / USDA 110).